A 572-amino-acid polypeptide reads, in one-letter code: Formate--tetrahydrofolate ligase (572 aa).

81 to 88 serves as a coordination point for ATP; that stretch reads TPAGEGKT.

This sequence belongs to the formate--tetrahydrofolate ligase family.

It carries out the reaction (6S)-5,6,7,8-tetrahydrofolate + formate + ATP = (6R)-10-formyltetrahydrofolate + ADP + phosphate. Its pathway is one-carbon metabolism; tetrahydrofolate interconversion. In Granulibacter bethesdensis (strain ATCC BAA-1260 / CGDNIH1), this protein is Formate--tetrahydrofolate ligase.